Consider the following 310-residue polypeptide: Pantothenate kinase (310 aa).

Position 95–102 (95–102 (GSVAVGKS)) interacts with ATP.

It belongs to the prokaryotic pantothenate kinase family.

It localises to the cytoplasm. The catalysed reaction is (R)-pantothenate + ATP = (R)-4'-phosphopantothenate + ADP + H(+). It functions in the pathway cofactor biosynthesis; coenzyme A biosynthesis; CoA from (R)-pantothenate: step 1/5. The sequence is that of Pantothenate kinase from Rhodococcus erythropolis (strain PR4 / NBRC 100887).